The sequence spans 105 residues: Iron-sulfur cluster assembly protein CyaY (105 aa).

Belongs to the frataxin family.

Its function is as follows. Involved in iron-sulfur (Fe-S) cluster assembly. May act as a regulator of Fe-S biogenesis. The protein is Iron-sulfur cluster assembly protein CyaY of Paraburkholderia phymatum (strain DSM 17167 / CIP 108236 / LMG 21445 / STM815) (Burkholderia phymatum).